We begin with the raw amino-acid sequence, 363 residues long: UDP-N-acetylglucosamine--N-acetylmuramyl-(pentapeptide) pyrophosphoryl-undecaprenol N-acetylglucosamine transferase (363 aa).

Residues 10-12, N124, S195, I248, and Q293 contribute to the UDP-N-acetyl-alpha-D-glucosamine site; that span reads TGG.

The protein belongs to the glycosyltransferase 28 family. MurG subfamily.

The protein resides in the cell membrane. The enzyme catalyses Mur2Ac(oyl-L-Ala-gamma-D-Glu-L-Lys-D-Ala-D-Ala)-di-trans,octa-cis-undecaprenyl diphosphate + UDP-N-acetyl-alpha-D-glucosamine = beta-D-GlcNAc-(1-&gt;4)-Mur2Ac(oyl-L-Ala-gamma-D-Glu-L-Lys-D-Ala-D-Ala)-di-trans,octa-cis-undecaprenyl diphosphate + UDP + H(+). Its pathway is cell wall biogenesis; peptidoglycan biosynthesis. Its function is as follows. Cell wall formation. Catalyzes the transfer of a GlcNAc subunit on undecaprenyl-pyrophosphoryl-MurNAc-pentapeptide (lipid intermediate I) to form undecaprenyl-pyrophosphoryl-MurNAc-(pentapeptide)GlcNAc (lipid intermediate II). The polypeptide is UDP-N-acetylglucosamine--N-acetylmuramyl-(pentapeptide) pyrophosphoryl-undecaprenol N-acetylglucosamine transferase (Lacticaseibacillus casei (strain BL23) (Lactobacillus casei)).